A 437-amino-acid chain; its full sequence is Ribosomal protein uS12 methylthiotransferase RimO (437 aa).

The region spanning 4 to 114 (PRISFVSLGC…VIEAVHTAIP (111 aa)) is the MTTase N-terminal domain. [4Fe-4S] cluster contacts are provided by cysteine 13, cysteine 49, cysteine 78, cysteine 145, cysteine 149, and cysteine 152. Residues 131–369 (LTPRHYAYLK…MAKQQQISTH (239 aa)) enclose the Radical SAM core domain. The TRAM domain maps to 372-437 (KKKIGKRLQV…DAYDLYGIAV (66 aa)).

Belongs to the methylthiotransferase family. RimO subfamily. The cofactor is [4Fe-4S] cluster.

Its subcellular location is the cytoplasm. It catalyses the reaction L-aspartate(89)-[ribosomal protein uS12]-hydrogen + (sulfur carrier)-SH + AH2 + 2 S-adenosyl-L-methionine = 3-methylsulfanyl-L-aspartate(89)-[ribosomal protein uS12]-hydrogen + (sulfur carrier)-H + 5'-deoxyadenosine + L-methionine + A + S-adenosyl-L-homocysteine + 2 H(+). Its function is as follows. Catalyzes the methylthiolation of an aspartic acid residue of ribosomal protein uS12. The polypeptide is Ribosomal protein uS12 methylthiotransferase RimO (Bartonella tribocorum (strain CIP 105476 / IBS 506)).